Here is a 317-residue protein sequence, read N- to C-terminus: Malate dehydrogenase (317 aa).

Residues 15-20 (GSGNIG) and Asp-39 each bind NAD(+). Substrate-binding residues include Arg-88 and Arg-94. NAD(+) is bound by residues Asn-101 and 124-126 (VTN). The substrate site is built by Asn-126 and Arg-157. The active-site Proton acceptor is His-181.

This sequence belongs to the LDH/MDH superfamily. MDH type 3 family.

The enzyme catalyses (S)-malate + NAD(+) = oxaloacetate + NADH + H(+). In terms of biological role, catalyzes the reversible oxidation of malate to oxaloacetate. The sequence is that of Malate dehydrogenase from Ehrlichia ruminantium (strain Gardel).